The sequence spans 33 residues: MSDIN-like toxin proprotein 1 (33 aa).

Residues 1–10 constitute a propeptide that is removed on maturation; that stretch reads MSDINATRLP. Residues 11–18 constitute a cross-link (cyclopeptide (Ile-Pro)); sequence IIWAPVVP. Positions 19–33 are excised as a propeptide; it reads CISDDNDSTLTRGQR.

This sequence belongs to the MSDIN fungal toxin family. Post-translationally, processed by the macrocyclase-peptidase enzyme POPB to yield a toxic cyclic octapeptide. POPB first removes 10 residues from the N-terminus. Conformational trapping of the remaining peptide forces the enzyme to release this intermediate rather than proceed to macrocyclization. The enzyme rebinds the remaining peptide in a different conformation and catalyzes macrocyclization of the N-terminal 8 residues.

Functionally, probable toxin that belongs to the MSDIN-like toxin family responsible for a large number of food poisoning cases and deaths. The sequence is that of MSDIN-like toxin proprotein 1 from Amanita fuliginea (East Asian brown death cap).